We begin with the raw amino-acid sequence, 278 residues long: Protein Rv2133c (278 aa).

This Mycobacterium tuberculosis (strain ATCC 25618 / H37Rv) protein is Protein Rv2133c.